Consider the following 250-residue polypeptide: UPF0259 membrane protein Spro_2675 (250 aa).

The next 6 membrane-spanning stretches (helical) occupy residues 23–43 (ILML…AFSP), 87–107 (AATF…LTLI), 132–152 (LLLL…LFVV), 156–176 (IMAI…KGVF), 192–212 (VIVP…FMVS), and 222–242 (ASVV…IYLF).

It belongs to the UPF0259 family.

It is found in the cell inner membrane. The protein is UPF0259 membrane protein Spro_2675 of Serratia proteamaculans (strain 568).